The sequence spans 154 residues: Myoglobin (154 aa).

The Globin domain occupies Gly2 to Lys148. Ser4 carries the post-translational modification Phosphoserine. Residue Thr68 is modified to Phosphothreonine. His94 is a heme b binding site.

This sequence belongs to the globin family. Monomeric.

Its subcellular location is the cytoplasm. The protein resides in the sarcoplasm. The enzyme catalyses Fe(III)-heme b-[protein] + nitric oxide + H2O = Fe(II)-heme b-[protein] + nitrite + 2 H(+). It catalyses the reaction H2O2 + AH2 = A + 2 H2O. Monomeric heme protein which primary function is to store oxygen and facilitate its diffusion within muscle tissues. Reversibly binds oxygen through a pentacoordinated heme iron and enables its timely and efficient release as needed during periods of heightened demand. Depending on the oxidative conditions of tissues and cells, and in addition to its ability to bind oxygen, it also has a nitrite reductase activity whereby it regulates the production of bioactive nitric oxide. Under stress conditions, like hypoxia and anoxia, it also protects cells against reactive oxygen species thanks to its pseudoperoxidase activity. The chain is Myoglobin (MB) from Loxodonta africana (African elephant).